The chain runs to 127 residues: Holo-[acyl-carrier-protein] synthase (127 aa).

The Mg(2+) site is built by Asp-9 and Glu-58.

It belongs to the P-Pant transferase superfamily. AcpS family. The cofactor is Mg(2+).

The protein localises to the cytoplasm. The enzyme catalyses apo-[ACP] + CoA = holo-[ACP] + adenosine 3',5'-bisphosphate + H(+). In terms of biological role, transfers the 4'-phosphopantetheine moiety from coenzyme A to a Ser of acyl-carrier-protein. In Shewanella sp. (strain MR-7), this protein is Holo-[acyl-carrier-protein] synthase.